The sequence spans 718 residues: U-box domain-containing protein 5 (718 aa).

A U-box domain is found at 218-292; that stretch reads TLPEKFKCTL…SEWCAKNGLD (75 aa). ARM repeat units lie at residues 493 to 532, 534 to 571, and 573 to 613; these read PHGP…NLSS, MEIC…NLCS, and EKGR…QLCV. The disordered stretch occupies residues 662-704; it reads KEEEEEVSSRPEGRTTASPTSQVVTPVTHPEPVKITPSPKKSG. Positions 676 to 686 are enriched in polar residues; sequence TTASPTSQVVT.

It carries out the reaction S-ubiquitinyl-[E2 ubiquitin-conjugating enzyme]-L-cysteine + [acceptor protein]-L-lysine = [E2 ubiquitin-conjugating enzyme]-L-cysteine + N(6)-ubiquitinyl-[acceptor protein]-L-lysine.. The protein operates within protein modification; protein ubiquitination. Its function is as follows. Functions as an E3 ubiquitin ligase. This chain is U-box domain-containing protein 5 (PUB5), found in Arabidopsis thaliana (Mouse-ear cress).